We begin with the raw amino-acid sequence, 101 residues long: Antiviral protein CAP (101 aa).

Its function is as follows. Has antiviral activity against tobacco mosaic virus and antitumor activity. This is Antiviral protein CAP from Coprinus comatus (Shaggy mane).